Here is a 432-residue protein sequence, read N- to C-terminus: Glial fibrillary acidic protein (432 aa).

A head region spans residues Met-1 to Glu-72. Thr-7 bears the Phosphothreonine; by AURKB and ROCK1 mark. At Arg-12 the chain carries Omega-N-methylarginine. The residue at position 13 (Ser-13) is a Phosphoserine; by AURKB and ROCK1. Citrulline is present on residues Arg-30 and Arg-36. A Phosphoserine; by AURKB and ROCK1 modification is found at Ser-38. The IF rod domain occupies Glu-69–Ile-377. The segment at Met-73–Leu-104 is coil 1A. Ser-82 is modified (phosphoserine). Positions Arg-105–Val-115 are linker 1. Residues Thr-110 and Thr-150 each carry the phosphothreonine modification. The interval Tyr-116–Gln-214 is coil 1B. Residues Leu-215–Asp-230 are linker 12. The coil 2A stretch occupies residues Leu-231–Glu-252. Residues Ala-253 to Trp-256 form a linker 2 region. Positions Tyr-257–Ile-377 are coil 2B. At Arg-270 the chain carries Citrulline. Ser-323 is modified (phosphoserine). The interval Thr-378–Met-432 is tail. Residue Thr-383 is modified to Phosphothreonine. Ser-385 carries the phosphoserine modification. Citrulline occurs at positions 406 and 416.

Belongs to the intermediate filament family. Interacts with SYNM. In terms of processing, phosphorylated by PKN1.

The protein localises to the cytoplasm. GFAP, a class-III intermediate filament, is a cell-specific marker that, during the development of the central nervous system, distinguishes astrocytes from other glial cells. The chain is Glial fibrillary acidic protein (GFAP) from Pongo abelii (Sumatran orangutan).